An 833-amino-acid chain; its full sequence is Leucine--tRNA ligase (833 aa).

The 'HIGH' region motif lies at 41–52 (PYPSGAGLHVGH). The 'KMSKS' region signature appears at 610-614 (KMSKS). Lys613 is a binding site for ATP.

This sequence belongs to the class-I aminoacyl-tRNA synthetase family.

Its subcellular location is the cytoplasm. The enzyme catalyses tRNA(Leu) + L-leucine + ATP = L-leucyl-tRNA(Leu) + AMP + diphosphate. The sequence is that of Leucine--tRNA ligase from Streptococcus pneumoniae (strain 70585).